The sequence spans 142 residues: MLKIEEIKEILPHRYPFLLIDRVTEMDIEEKLFVKGYKNVSANEQFFQGHYPQEPIMPGVLQIEALAQAGAVAILSMEKFKGKTPLFAGTNKVRFKAKVVPGDRLDLYCEIVKLKGPIGIGKGIASVDGKTVCEAEILFAIG.

Histidine 50 is an active-site residue.

It belongs to the thioester dehydratase family. FabZ subfamily.

It is found in the cytoplasm. The catalysed reaction is a (3R)-hydroxyacyl-[ACP] = a (2E)-enoyl-[ACP] + H2O. In terms of biological role, involved in unsaturated fatty acids biosynthesis. Catalyzes the dehydration of short chain beta-hydroxyacyl-ACPs and long chain saturated and unsaturated beta-hydroxyacyl-ACPs. This chain is 3-hydroxyacyl-[acyl-carrier-protein] dehydratase FabZ, found in Clostridium botulinum (strain Alaska E43 / Type E3).